The following is a 29-amino-acid chain: Protein Tat (29 aa).

The interval proline 1–aspartate 29 is disordered. The Cell attachment site signature appears at arginine 6 to aspartate 8. Over residues glutamate 13–aspartate 29 the composition is skewed to basic and acidic residues.

This sequence belongs to the lentiviruses Tat family. Interacts with host CCNT1. Associates with the P-TEFb complex composed at least of Tat, P-TEFb (CDK9 and CCNT1), TAR RNA, RNA Pol II. Recruits the HATs CREBBP, TAF1/TFIID, EP300, PCAF and GCN5L2. Interacts with host KAT5/Tip60; this interaction targets the latter to degradation. Interacts with the host deacetylase SIRT1. Interacts with host capping enzyme RNGTT; this interaction stimulates RNGTT. Binds to host KDR, and to the host integrins ITGAV/ITGB3 and ITGA5/ITGB1. Interacts with host KPNB1/importin beta-1 without previous binding to KPNA1/importin alpha-1. Interacts with EIF2AK2. Interacts with host nucleosome assembly protein NAP1L1; this interaction may be required for the transport of Tat within the nucleus, since the two proteins interact at the nuclear rim. Interacts with host C1QBP/SF2P32; this interaction involves lysine-acetylated Tat. Interacts with the host chemokine receptors CCR2, CCR3 and CXCR4. Interacts with host DPP4/CD26; this interaction may trigger an anti-proliferative effect. Interacts with host LDLR. Interacts with the host extracellular matrix metalloproteinase MMP1. Interacts with host PRMT6; this interaction mediates Tat's methylation. Interacts with, and is ubiquitinated by MDM2/Hdm2. Interacts with host PSMC3 and HTATIP2. Interacts with STAB1; this interaction may overcome SATB1-mediated repression of IL2 and IL2RA (interleukin) in T cells by binding to the same domain than HDAC1. Interacts (when acetylated) with human CDK13, thereby increasing HIV-1 mRNA splicing and promoting the production of the doubly spliced HIV-1 protein Nef. In terms of processing, acetylation by EP300, CREBBP, GCN5L2/GCN5 and PCAF regulates the transactivation activity of Tat. Post-translationally, phosphorylated by EIF2AK2 on serine and threonine residues adjacent to the basic region important for TAR RNA binding and function. Phosphorylation of Tat by EIF2AK2 is dependent on the prior activation of EIF2AK2 by dsRNA. Asymmetrical arginine methylation by host PRMT6 seems to diminish the transactivation capacity of Tat and affects the interaction with host CCNT1. In terms of processing, polyubiquitination by MDM2 does not target Tat to degradation, but activates its transactivation function and fosters interaction with CCNT1 and TAR RNA.

It localises to the host nucleus. It is found in the host nucleolus. The protein localises to the host cytoplasm. Its subcellular location is the secreted. Transcriptional activator that increases RNA Pol II processivity, thereby increasing the level of full-length viral transcripts. Recognizes a hairpin structure at the 5'-LTR of the nascent viral mRNAs referred to as the transactivation responsive RNA element (TAR) and recruits the cyclin T1-CDK9 complex (P-TEFb complex) that will in turn hyperphosphorylate the RNA polymerase II to allow efficient elongation. The CDK9 component of P-TEFb and other Tat-activated kinases hyperphosphorylate the C-terminus of RNA Pol II that becomes stabilized and much more processive. Other factors such as HTATSF1/Tat-SF1, SUPT5H/SPT5, and HTATIP2 are also important for Tat's function. Besides its effect on RNA Pol II processivity, Tat induces chromatin remodeling of proviral genes by recruiting the histone acetyltransferases (HATs) CREBBP, EP300 and PCAF to the chromatin. This also contributes to the increase in proviral transcription rate, especially when the provirus integrates in transcriptionally silent region of the host genome. To ensure maximal activation of the LTR, Tat mediates nuclear translocation of NF-kappa-B by interacting with host RELA. Through its interaction with host TBP, Tat may also modulate transcription initiation. Tat can reactivate a latently infected cell by penetrating in it and transactivating its LTR promoter. In the cytoplasm, Tat is thought to act as a translational activator of HIV-1 mRNAs. In terms of biological role, extracellular circulating Tat can be endocytosed by surrounding uninfected cells via the binding to several surface receptors such as CD26, CXCR4, heparan sulfate proteoglycans (HSPG) or LDLR. Neurons are rarely infected, but they internalize Tat via their LDLR. Endosomal low pH allows Tat to cross the endosome membrane to enter the cytosol and eventually further translocate into the nucleus, thereby inducing severe cell dysfunctions ranging from cell activation to cell death. Through its interaction with nuclear HATs, Tat is potentially able to control the acetylation-dependent cellular gene expression. Tat seems to inhibit the HAT activity of KAT5/Tip60 and TAF1, and consequently modify the expression of specific cellular genes. Modulates the expression of many cellular genes involved in cell survival, proliferation or in coding for cytokines (such as IL10) or cytokine receptors. May be involved in the derepression of host interleukin IL2 expression. Mediates the activation of cyclin-dependent kinases and dysregulation of microtubule network. Tat plays a role in T-cell and neurons apoptosis. Tat induced neurotoxicity and apoptosis probably contribute to neuroAIDS. Host extracellular matrix metalloproteinase MMP1 cleaves Tat and decreases Tat's mediated neurotoxicity. Circulating Tat also acts as a chemokine-like and/or growth factor-like molecule that binds to specific receptors on the surface of the cells, affecting many cellular pathways. In the vascular system, Tat binds to ITGAV/ITGB3 and ITGA5/ITGB1 integrins dimers at the surface of endothelial cells and competes with bFGF for heparin-binding sites, leading to an excess of soluble bFGF. Binds to KDR/VEGFR-2. All these Tat-mediated effects enhance angiogenesis in Kaposi's sarcoma lesions. This is Protein Tat from Homo sapiens (Human).